The sequence spans 1207 residues: Disease resistance protein RPP2B (1207 aa).

The TIR domain occupies 15–180; that stretch reads CEFDVFVSFR…EIVKNTFRML (166 aa). Residue E89 is part of the active site. One can recognise an NB-ARC domain in the interval 201–445; that stretch reads ELEKLLMFDN…FLDIACFFRS (245 aa). LRR repeat units lie at residues 607-630, 653-676, 677-699, 720-743, 744-767, 769-791, 792-815, 840-862, and 863-886; these read PKEL…EKNT, AKNL…VKQM, NELI…GFKI, SESI…IESL, HSLI…LYKL, SLQE…KEKM, ECLE…CLSN, NSFL…KFSS, and LRSL…IEKL.

This sequence belongs to the disease resistance TIR-NB-LRR family.

The catalysed reaction is NAD(+) + H2O = ADP-D-ribose + nicotinamide + H(+). Functionally, disease resistance protein that cooperates with RPP2A to confer resistance to Hyaloperonospora parasitica isolate Cala2. In Arabidopsis thaliana (Mouse-ear cress), this protein is Disease resistance protein RPP2B.